A 169-amino-acid chain; its full sequence is Probable phospholipid hydroperoxide glutathione peroxidase (169 aa).

Residue cysteine 43 is part of the active site.

The protein belongs to the glutathione peroxidase family. Germinating seed, apex, flower, as well as in stressed tissues.

It is found in the cytoplasm. The enzyme catalyses a hydroperoxy polyunsaturated fatty acid + 2 glutathione = a hydroxy polyunsaturated fatty acid + glutathione disulfide + H2O. Functionally, protects cells and enzymes from oxidative damage, by catalyzing the reduction of hydrogen peroxide, lipid peroxides and organic hydroperoxide, by glutathione. In Nicotiana sylvestris (Wood tobacco), this protein is Probable phospholipid hydroperoxide glutathione peroxidase.